We begin with the raw amino-acid sequence, 184 residues long: HVA22-like protein c (184 aa).

3 consecutive transmembrane segments (helical) span residues 13–33, 51–71, and 73–93; these read VLIK…YPLY, LTYW…SKPL, and WFPI…LPQF.

This sequence belongs to the DP1 family. In terms of tissue distribution, predominantly expressed in flower buds and stem.

Its subcellular location is the membrane. The chain is HVA22-like protein c (HVA22C) from Arabidopsis thaliana (Mouse-ear cress).